A 557-amino-acid polypeptide reads, in one-letter code: DNA ligase (557 aa).

E249 provides a ligand contact to ATP. K251 functions as the N6-AMP-lysine intermediate in the catalytic mechanism. Residues R256, R271, E301, F340, R417, and K423 each coordinate ATP.

It belongs to the ATP-dependent DNA ligase family. Requires Mg(2+) as cofactor.

The catalysed reaction is ATP + (deoxyribonucleotide)n-3'-hydroxyl + 5'-phospho-(deoxyribonucleotide)m = (deoxyribonucleotide)n+m + AMP + diphosphate.. In terms of biological role, DNA ligase that seals nicks in double-stranded DNA during DNA replication, DNA recombination and DNA repair. The protein is DNA ligase of Methanothermobacter thermautotrophicus (Methanobacterium thermoformicicum).